Here is a 172-residue protein sequence, read N- to C-terminus: Large ribosomal subunit protein uL10 (172 aa).

It belongs to the universal ribosomal protein uL10 family. Part of the ribosomal stalk of the 50S ribosomal subunit. The N-terminus interacts with L11 and the large rRNA to form the base of the stalk. The C-terminus forms an elongated spine to which L12 dimers bind in a sequential fashion forming a multimeric L10(L12)X complex.

Forms part of the ribosomal stalk, playing a central role in the interaction of the ribosome with GTP-bound translation factors. The polypeptide is Large ribosomal subunit protein uL10 (Leifsonia xyli subsp. xyli (strain CTCB07)).